A 322-amino-acid polypeptide reads, in one-letter code: Light-dependent protochlorophyllide reductase (322 aa).

Belongs to the short-chain dehydrogenases/reductases (SDR) family. POR subfamily.

It carries out the reaction chlorophyllide a + NADP(+) = protochlorophyllide a + NADPH + H(+). The protein operates within porphyrin-containing compound metabolism; chlorophyll biosynthesis. Its function is as follows. Phototransformation of protochlorophyllide (Pchlide) to chlorophyllide (Chlide). The sequence is that of Light-dependent protochlorophyllide reductase (por) from Synechocystis sp. (strain ATCC 27184 / PCC 6803 / Kazusa).